A 433-amino-acid chain; its full sequence is Enolase (433 aa).

Position 163 (Gln-163) interacts with (2R)-2-phosphoglycerate. Glu-205 serves as the catalytic Proton donor. Mg(2+) is bound by residues Asp-242, Glu-285, and Asp-312. Residues Lys-337, Arg-366, Ser-367, and Lys-388 each coordinate (2R)-2-phosphoglycerate. Lys-337 acts as the Proton acceptor in catalysis.

Belongs to the enolase family. It depends on Mg(2+) as a cofactor.

It localises to the cytoplasm. Its subcellular location is the secreted. It is found in the cell surface. It carries out the reaction (2R)-2-phosphoglycerate = phosphoenolpyruvate + H2O. It participates in carbohydrate degradation; glycolysis; pyruvate from D-glyceraldehyde 3-phosphate: step 4/5. Catalyzes the reversible conversion of 2-phosphoglycerate (2-PG) into phosphoenolpyruvate (PEP). It is essential for the degradation of carbohydrates via glycolysis. The protein is Enolase of Lawsonia intracellularis (strain PHE/MN1-00).